A 524-amino-acid chain; its full sequence is BEL1-like homeodomain protein 3 (524 aa).

The SR/KY domain stretch occupies residues 171–187 (SRYLKPTQQLLDEVVSV). Composition is skewed to basic and acidic residues over residues 195 to 205 (NKKMKNDKGQD) and 216 to 235 (EDDK…ELQS). The tract at residues 195-236 (NKKMKNDKGQDFHNGSSDNITEDDKSQSQELSPSERQELQSK) is disordered. The interval 229–300 (ERQELQSKKS…CLRDAIKEQI (72 aa)) is BELL domain. A DNA-binding region (homeobox) is located at residues 346–408 (AWRPQRGLPE…NARVRLWKPM (63 aa)). The interval 429–463 (QDTKKMQETSQLKHEDSSSSQQQNQGNNNNNIPYT) is disordered. The span at 430 to 445 (DTKKMQETSQLKHEDS) shows a compositional bias: basic and acidic residues. Positions 446-459 (SSSQQQNQGNNNNN) are enriched in low complexity.

It belongs to the TALE/BELL homeobox family. As to quaternary structure, may form heterodimeric complex with the TALE/KNOX protein STM. Interacts with OFP1, OFP2, OFP3, OFP4, OFP5 and OFP15.

The protein resides in the nucleus. In terms of biological role, transcription factor that is responsive of the nuclear import of SHOOT MERISTEMLESS (STM). In Arabidopsis thaliana (Mouse-ear cress), this protein is BEL1-like homeodomain protein 3 (BLH3).